The chain runs to 107 residues: MLKVLVVVALLVTLISYSSSEGIDDLEADELLSLMANEQTRKECIPKHHECTSNKHGCCRGNFFKYKCQCTTVVTQDGGQTERCFCGTPPHHKAAELVVGFGKKIFG.

A signal peptide spans 1 to 20 (MLKVLVVVALLVTLISYSSS). The propeptide occupies 21-41 (EGIDDLEADELLSLMANEQTR). Intrachain disulfides connect cysteine 44–cysteine 59, cysteine 51–cysteine 68, cysteine 58–cysteine 86, and cysteine 70–cysteine 84.

Belongs to the neurotoxin 19 (CSTX) family. 04 (U1-Lctx) subfamily. Expressed by the venom gland.

Its subcellular location is the secreted. This is U1-lycotoxin-Ls1w from Lycosa singoriensis (Wolf spider).